The chain runs to 873 residues: Paramyosin (873 aa).

The tract at residues 1-25 (MSSRSSKYMYKSSGGAGDISIEYGT) is nonhelical region. Positions 26–852 (DLGALTRLED…IRAKHRSWVT (827 aa)) form a coiled coil. The interval 853–873 (TSQVPGGTRQVFVTEESSQNF) is nonhelical region.

It belongs to the paramyosin family. In terms of assembly, homodimer. Binds IgG and collagen. In terms of tissue distribution, expressed in all tissues except in saliva.

The protein localises to the cytoplasm. Its subcellular location is the myofibril. In terms of biological role, paramyosin is a major structural component of many thick filaments isolated from invertebrate muscles. The chain is Paramyosin (PRM) from Rhipicephalus microplus (Cattle tick).